A 56-amino-acid polypeptide reads, in one-letter code: Ovomucoid (56 aa).

Residues 6–56 form the Kazal-like domain; that stretch reads VDCSEYPKPDCTLEYRPLCGSDNKTYANKCNFCNAVVESNGTLTLSHFGKC. Intrachain disulfides connect C8-C38, C16-C35, and C24-C56. N45 is a glycosylation site (N-linked (GlcNAc...) asparagine).

It localises to the secreted. In Callipepla squamata castanogastris (Chestnut bellied scaled quail), this protein is Ovomucoid.